Consider the following 521-residue polypeptide: MAHQKILILDFGSQVTQLIARRVREQQVYCEIHPFDVSDDFVREFAPAGVILSGGPNSVYEAVGWHAPQSVFELGVPVLGICYGMQTMAQQLGGSVESSGKREFGYAEIRARGHSELFRSIEDRTNDEGHGLLDVWMSHGDKVTALPPGFKVIASNESCPVAGMADEVRKFYAVQFHPEVTHTIKGRDMLARFVHEICGCGRDWNMPDYVNEAIEKVRAQVGQEEVILGLSGGVDSSVVAALLHRAIGEQLTCVFVDNGLLRLNEAEQVMLTFARNLGVKVIHVDATEQFMGHLKGVSDPEAKRKIIGREFVEVFQAEANKLPNAKWLAQGTIYPDVIESAGSKTGKAHTIKSHHNVGGLPETLNLKLLEPLRELFKDEVRELGIALGLPHEMVYRHPFPGPGLGVRILGEVKQEFAELLRRADAIFIDELRAADWYDKTSQAFAVFLPVKSVGVMGDGRTYEYVVALRAVETQDFMTAHWAELPHSLLGKVSNRIINEVRGINRVVYDISGKPPATIEWE.

The 199-residue stretch at K5–D203 folds into the Glutamine amidotransferase type-1 domain. C82 functions as the Nucleophile in the catalytic mechanism. Residues H177 and E179 contribute to the active site. A GMPS ATP-PPase domain is found at W204–R396. An ATP-binding site is contributed by S231–S237.

Homodimer.

The catalysed reaction is XMP + L-glutamine + ATP + H2O = GMP + L-glutamate + AMP + diphosphate + 2 H(+). It functions in the pathway purine metabolism; GMP biosynthesis; GMP from XMP (L-Gln route): step 1/1. Catalyzes the synthesis of GMP from XMP. This is GMP synthase [glutamine-hydrolyzing] from Aromatoleum aromaticum (strain DSM 19018 / LMG 30748 / EbN1) (Azoarcus sp. (strain EbN1)).